A 204-amino-acid polypeptide reads, in one-letter code: Guanylate kinase (204 aa).

A Guanylate kinase-like domain is found at 4-182; sequence GMLVVVSGPS…AVNDLEAVLT (179 aa). 11–18 is an ATP binding site; sequence GPSGAGKG.

This sequence belongs to the guanylate kinase family.

It localises to the cytoplasm. The catalysed reaction is GMP + ATP = GDP + ADP. In terms of biological role, essential for recycling GMP and indirectly, cGMP. The protein is Guanylate kinase of Carboxydothermus hydrogenoformans (strain ATCC BAA-161 / DSM 6008 / Z-2901).